A 224-amino-acid polypeptide reads, in one-letter code: Probable 2-phosphosulfolactate phosphatase (224 aa).

Belongs to the ComB family. Requires Mg(2+) as cofactor.

It carries out the reaction (2R)-O-phospho-3-sulfolactate + H2O = (2R)-3-sulfolactate + phosphate. The protein is Probable 2-phosphosulfolactate phosphatase of Pseudothermotoga lettingae (strain ATCC BAA-301 / DSM 14385 / NBRC 107922 / TMO) (Thermotoga lettingae).